The chain runs to 87 residues: Phosphoribosyl-ATP pyrophosphatase (87 aa).

This sequence belongs to the PRA-PH family.

It is found in the cytoplasm. The catalysed reaction is 1-(5-phospho-beta-D-ribosyl)-ATP + H2O = 1-(5-phospho-beta-D-ribosyl)-5'-AMP + diphosphate + H(+). Its pathway is amino-acid biosynthesis; L-histidine biosynthesis; L-histidine from 5-phospho-alpha-D-ribose 1-diphosphate: step 2/9. This is Phosphoribosyl-ATP pyrophosphatase from Bifidobacterium adolescentis (strain ATCC 15703 / DSM 20083 / NCTC 11814 / E194a).